A 205-amino-acid polypeptide reads, in one-letter code: Small ribosomal subunit protein uS4 (205 aa).

The S4 RNA-binding domain maps to 91 to 149 (MRLDALVLRAAFARSISQARQLVVHRHILVDGKLVDRPSYSVSPGQTVKVKPKSVPLDP).

It belongs to the universal ribosomal protein uS4 family. Part of the 30S ribosomal subunit. Contacts protein S5. The interaction surface between S4 and S5 is involved in control of translational fidelity.

One of the primary rRNA binding proteins, it binds directly to 16S rRNA where it nucleates assembly of the body of the 30S subunit. Functionally, with S5 and S12 plays an important role in translational accuracy. The chain is Small ribosomal subunit protein uS4 from Tropheryma whipplei (strain TW08/27) (Whipple's bacillus).